The following is a 341-amino-acid chain: MNDLLSGSFKTSVADGSSPPHSHNIEMSKAKVSGGSCHGGNNLDTFFLDVEVVNEDLKELDRLCHNLRSSNEQSKTLHNANAVKELKKKMDADVTAALKTARRLKGNLEALDRANEVNRSLPESGPGSSSDRQRTSVVNGLRKKLKDEMEKFSRVRETITNEYKETVGRMCFTVTGEYPDEATLERLISTGESETFLQKAIQEQGRGRILDTINEIQERHDAVKDIEKSLNELHQVFLDMAVLVEHQGAQLDDIEGNVKRANSLVRSGADRLVKARFYQKNTRKWTCFAILLLLIIVVLIVVFTVKPWESNGGGGGGAPRQATPVQAQPPPPPAVNRRLLR.

Met1 bears the N-acetylmethionine mark. 2 disordered regions span residues 1–22 (MNDL…PPHS) and 111–137 (LDRA…RTSV). At 1–284 (MNDLLSGSFK…ARFYQKNTRK (284 aa)) the chain is on the cytoplasmic side. Polar residues-rich tracts occupy residues 8–21 (SFKT…SPPH) and 126–137 (PGSSSDRQRTSV). Residues 64–185 (CHNLRSSNEQ…GEYPDEATLE (122 aa)) are a coiled coil. In terms of domain architecture, t-SNARE coiled-coil homology spans 213–275 (INEIQERHDA…RSGADRLVKA (63 aa)). The chain crosses the membrane as a helical; Anchor for type IV membrane protein span at residues 285–305 (WTCFAILLLLIIVVLIVVFTV). The Vesicular portion of the chain corresponds to 306–341 (KPWESNGGGGGGAPRQATPVQAQPPPPPAVNRRLLR). The interval 312–341 (GGGGGGAPRQATPVQAQPPPPPAVNRRLLR) is disordered.

It belongs to the syntaxin family. In terms of assembly, part of the t-SNARE complex.

Its subcellular location is the membrane. In terms of biological role, vesicle trafficking protein that functions in the secretory pathway. The sequence is that of Syntaxin-122 (SYP122) from Arabidopsis thaliana (Mouse-ear cress).